The chain runs to 140 residues: uncharacterized protein (140 aa).

2 helical membrane-spanning segments follow: residues 4-21 (ILKIGILGFGAVFGYLFG) and 26-48 (LVKVLVCFIVADYISGLLASGYL).

Belongs to the bacteriophage holin family. Cp-1 holin subfamily.

It localises to the cell membrane. This is an uncharacterized protein from Listeria innocua serovar 6a (strain ATCC BAA-680 / CLIP 11262).